We begin with the raw amino-acid sequence, 469 residues long: ATP synthase subunit beta (469 aa).

155 to 162 (GGAGVGKT) lines the ATP pocket.

The protein belongs to the ATPase alpha/beta chains family. As to quaternary structure, F-type ATPases have 2 components, CF(1) - the catalytic core - and CF(0) - the membrane proton channel. CF(1) has five subunits: alpha(3), beta(3), gamma(1), delta(1), epsilon(1). CF(0) has three main subunits: a(1), b(2) and c(9-12). The alpha and beta chains form an alternating ring which encloses part of the gamma chain. CF(1) is attached to CF(0) by a central stalk formed by the gamma and epsilon chains, while a peripheral stalk is formed by the delta and b chains.

The protein resides in the cell inner membrane. It carries out the reaction ATP + H2O + 4 H(+)(in) = ADP + phosphate + 5 H(+)(out). Produces ATP from ADP in the presence of a proton gradient across the membrane. The catalytic sites are hosted primarily by the beta subunits. This Helicobacter pylori (strain ATCC 700392 / 26695) (Campylobacter pylori) protein is ATP synthase subunit beta.